A 467-amino-acid polypeptide reads, in one-letter code: Probable glycerol-3-phosphate dehydrogenase [NAD(+)] 2, cytosolic (467 aa).

NAD(+) is bound by residues 47–52 (GAGAWG), Lys-195, and Ala-234. Lys-195 provides a ligand contact to substrate. Catalysis depends on Lys-284, which acts as the Proton acceptor. Residues Arg-346 and Gln-374 each coordinate NAD(+). 346–347 (RN) is a binding site for substrate.

This sequence belongs to the NAD-dependent glycerol-3-phosphate dehydrogenase family.

The protein resides in the cytoplasm. It is found in the cytosol. The catalysed reaction is sn-glycerol 3-phosphate + NAD(+) = dihydroxyacetone phosphate + NADH + H(+). In terms of biological role, may be involved in cell redox homeostasis. The chain is Probable glycerol-3-phosphate dehydrogenase [NAD(+)] 2, cytosolic from Oryza sativa subsp. japonica (Rice).